A 401-amino-acid polypeptide reads, in one-letter code: L-methionine gamma-lyase (401 aa).

Residues 59–61 (YTR) and 89–90 (GI) contribute to the pyridoxal 5'-phosphate site. Y114 contacts substrate. A pyridoxal 5'-phosphate-binding site is contributed by 210–212 (SAT). K213 is subject to N6-(pyridoxal phosphate)lysine. R377 serves as a coordination point for substrate.

This sequence belongs to the trans-sulfuration enzymes family. L-methionine gamma-lyase subfamily. As to quaternary structure, homotetramer; dimer of active dimers. It depends on pyridoxal 5'-phosphate as a cofactor.

The enzyme catalyses L-methionine + H2O = methanethiol + 2-oxobutanoate + NH4(+). It carries out the reaction L-homocysteine + H2O = 2-oxobutanoate + hydrogen sulfide + NH4(+) + H(+). Functionally, catalyzes the alpha,gamma-elimination of L-methionine to produce methanethiol, 2-oxobutanoate and ammonia; methanethiol (methyl mercaptan) is considered to be one of the main causes of the oral malodor associated with periodontitis and may also play a role in the pathogenicity of T.denticola. Also displays homocysteine desulfhydrase activity, degrading homocysteine to produce hydrogen sulfide, 2-oxobutanoate and ammonia. The chain is L-methionine gamma-lyase from Treponema denticola (strain ATCC 35405 / DSM 14222 / CIP 103919 / JCM 8153 / KCTC 15104).